A 283-amino-acid polypeptide reads, in one-letter code: Pantothenate synthetase (283 aa).

Residue M30 to H37 coordinates ATP. H37 serves as the catalytic Proton donor. Residue Q61 participates in (R)-pantoate binding. Q61 is a beta-alanine binding site. G147–D150 provides a ligand contact to ATP. Q153 is a binding site for (R)-pantoate. ATP is bound by residues V176 and M184–R187.

Belongs to the pantothenate synthetase family. Homodimer.

It is found in the cytoplasm. It catalyses the reaction (R)-pantoate + beta-alanine + ATP = (R)-pantothenate + AMP + diphosphate + H(+). The protein operates within cofactor biosynthesis; (R)-pantothenate biosynthesis; (R)-pantothenate from (R)-pantoate and beta-alanine: step 1/1. Functionally, catalyzes the condensation of pantoate with beta-alanine in an ATP-dependent reaction via a pantoyl-adenylate intermediate. The polypeptide is Pantothenate synthetase (Syntrophotalea carbinolica (strain DSM 2380 / NBRC 103641 / GraBd1) (Pelobacter carbinolicus)).